We begin with the raw amino-acid sequence, 268 residues long: ELL-associated factor 1 (268 aa).

A disordered region spans residues 106-268; sequence IQVKKTRAEG…LSESGSDSDD (163 aa). Positions 128-154 are enriched in pro residues; that stretch reads TRPPQTSQPPPPPPPMPFRAPTKPPVG. Ser165 carries the phosphoserine modification. The segment covering 171–181 has biased composition (basic and acidic residues); the sequence is DDIKRELRAEV. Residues 182 to 262 form a necessary for transactivation activity region; it reads DIIEQMSSSS…LRNDLQLSES (81 aa). Positions 188-213 are enriched in low complexity; the sequence is SSSSGSSSSDSESSSGSDDDSSSSGG. Residues 238-268 show a composition bias toward polar residues; it reads NGTSRPQGSNQLMNTLRNDLQLSESGSDSDD.

The protein belongs to the EAF family. In terms of assembly, component of the super elongation complex (SEC), at least composed of EAF1, EAF2, CDK9, MLLT3/AF9, AFF (AFF1 or AFF4), the P-TEFb complex and ELL (ELL, ELL2 or ELL3). Interacts with ELL and ELL2. As to expression, strongly expressed in heart, brain, placenta, lung, liver, skeletal muscle, kidney, pancreas, spleen, prostate, testis, small intestine and colon. Poorly expressed in thymus.

It is found in the nucleus speckle. The protein resides in the nucleus. Its subcellular location is the cajal body. Its function is as follows. Acts as a transcriptional transactivator of ELL and ELL2 elongation activities. The chain is ELL-associated factor 1 (EAF1) from Homo sapiens (Human).